A 66-amino-acid chain; its full sequence is Large ribosomal subunit protein uL29 (66 aa).

The protein belongs to the universal ribosomal protein uL29 family.

This chain is Large ribosomal subunit protein uL29, found in Rhizobium etli (strain CIAT 652).